Here is a 276-residue protein sequence, read N- to C-terminus: Large ribosomal subunit protein uL2c (276 aa).

The segment at Ala225 to Glu276 is disordered.

This sequence belongs to the universal ribosomal protein uL2 family. In terms of assembly, part of the 50S ribosomal subunit.

The protein resides in the plastid. Its subcellular location is the chloroplast. This is Large ribosomal subunit protein uL2c (rpl2) from Pinus thunbergii (Japanese black pine).